Reading from the N-terminus, the 417-residue chain is S-adenosylmethionine synthase (417 aa).

Residue histidine 16 participates in ATP binding. A Mg(2+)-binding site is contributed by aspartate 18. Glutamate 44 is a binding site for K(+). 2 residues coordinate L-methionine: glutamate 57 and glutamine 100. The flexible loop stretch occupies residues 100–110 (QSPDIAQGVTS). ATP-binding positions include 175–177 (DGK), 251–252 (KF), aspartate 260, 266–267 (RK), alanine 283, and lysine 287. Aspartate 260 lines the L-methionine pocket. Lysine 291 serves as a coordination point for L-methionine.

It belongs to the AdoMet synthase family. As to quaternary structure, homotetramer; dimer of dimers. Mg(2+) is required as a cofactor. It depends on K(+) as a cofactor.

The protein resides in the cytoplasm. It catalyses the reaction L-methionine + ATP + H2O = S-adenosyl-L-methionine + phosphate + diphosphate. It participates in amino-acid biosynthesis; S-adenosyl-L-methionine biosynthesis; S-adenosyl-L-methionine from L-methionine: step 1/1. In terms of biological role, catalyzes the formation of S-adenosylmethionine (AdoMet) from methionine and ATP. The overall synthetic reaction is composed of two sequential steps, AdoMet formation and the subsequent tripolyphosphate hydrolysis which occurs prior to release of AdoMet from the enzyme. The chain is S-adenosylmethionine synthase from Picosynechococcus sp. (strain ATCC 27264 / PCC 7002 / PR-6) (Agmenellum quadruplicatum).